Here is a 651-residue protein sequence, read N- to C-terminus: Cysteine-rich receptor-like protein kinase 42 (651 aa).

An N-terminal signal peptide occupies residues 1-28 (MRCLTKTRSFHYVIIFYSFFFLPFLSSS). The Extracellular portion of the chain corresponds to 29–251 (SDDQRTTVSG…HHKFHVLFNK (223 aa)). 2 Gnk2-homologous domains span residues 35–135 (TVSG…TYEF) and 137–236 (DESV…DHKF). 2 N-linked (GlcNAc...) asparagine glycosylation sites follow: Asn79 and Asn151. Residues 252–272 (GVIVAIVLTTSAFVMLILLAT) form a helical membrane-spanning segment. Over 273–651 (YVIMTKVSKT…SSESSTTRTI (379 aa)) the chain is Cytoplasmic. A Protein kinase domain is found at 315–604 (FSHKKMLGQG…IPSPTSPPFL (290 aa)). Residues 321-329 (LGQGGNGTV) and Lys343 each bind ATP. Tyr388 is subject to Phosphotyrosine. Catalysis depends on Asp440, which acts as the Proton acceptor. Residues Ser444 and Ser473 each carry the phosphoserine modification. Thr474 and Thr479 each carry phosphothreonine. Tyr487 is subject to Phosphotyrosine.

Belongs to the protein kinase superfamily. Ser/Thr protein kinase family. CRK subfamily.

It localises to the membrane. The enzyme catalyses L-seryl-[protein] + ATP = O-phospho-L-seryl-[protein] + ADP + H(+). The catalysed reaction is L-threonyl-[protein] + ATP = O-phospho-L-threonyl-[protein] + ADP + H(+). The protein is Cysteine-rich receptor-like protein kinase 42 (CRK42) of Arabidopsis thaliana (Mouse-ear cress).